The primary structure comprises 108 residues: Nucleoid-associated protein PSPTO_3645 (108 aa).

Residues 85–96 (QASQDKTASMTA) are compositionally biased toward polar residues. The tract at residues 85 to 108 (QASQDKTASMTAGMQLPPGMKLPF) is disordered.

It belongs to the YbaB/EbfC family. In terms of assembly, homodimer.

Its subcellular location is the cytoplasm. It is found in the nucleoid. Its function is as follows. Binds to DNA and alters its conformation. May be involved in regulation of gene expression, nucleoid organization and DNA protection. The protein is Nucleoid-associated protein PSPTO_3645 of Pseudomonas syringae pv. tomato (strain ATCC BAA-871 / DC3000).